Reading from the N-terminus, the 35-residue chain is Photosystem II reaction center protein Y (35 aa).

The Lumenal segment spans residues 1–4; sequence MDTR. A helical membrane pass occupies residues 5–23; that stretch reads LLVVLLPVATAAAWALFNI. Topologically, residues 24–35 are stromal; that stretch reads GRLALQQLKRMS.

This sequence belongs to the PsbY family. As to quaternary structure, PSII is composed of 1 copy each of membrane proteins PsbA, PsbB, PsbC, PsbD, PsbE, PsbF, PsbH, PsbI, PsbJ, PsbK, PsbL, PsbM, PsbT, PsbX, PsbY, PsbZ, Psb30/Ycf12, at least 3 peripheral proteins of the oxygen-evolving complex and a large number of cofactors. It forms dimeric complexes.

It localises to the plastid. Its subcellular location is the chloroplast thylakoid membrane. Loosely associated component of the core of photosystem II (PSII), it is not always seen in crystals. PSII is a light-driven water plastoquinone oxidoreductase, using light energy to abstract electrons from H(2)O, generating a proton gradient subsequently used for ATP formation. The sequence is that of Photosystem II reaction center protein Y from Emiliania huxleyi (Coccolithophore).